We begin with the raw amino-acid sequence, 224 residues long: Ribose-5-phosphate isomerase A (224 aa).

Residues 26 to 29, 81 to 84, and 94 to 97 each bind substrate; these read TGST, DGAD, and KGGG. Glu-103 serves as the catalytic Proton acceptor. Substrate is bound at residue Lys-121.

Belongs to the ribose 5-phosphate isomerase family. Homodimer.

It carries out the reaction aldehydo-D-ribose 5-phosphate = D-ribulose 5-phosphate. The protein operates within carbohydrate degradation; pentose phosphate pathway; D-ribose 5-phosphate from D-ribulose 5-phosphate (non-oxidative stage): step 1/1. In terms of biological role, catalyzes the reversible conversion of ribose-5-phosphate to ribulose 5-phosphate. The polypeptide is Ribose-5-phosphate isomerase A (Listeria innocua serovar 6a (strain ATCC BAA-680 / CLIP 11262)).